The sequence spans 325 residues: Ribosomal RNA small subunit methyltransferase H (325 aa).

Residues 39 to 41 (GGH), D59, F90, D108, and Q115 contribute to the S-adenosyl-L-methionine site.

Belongs to the methyltransferase superfamily. RsmH family.

The protein localises to the cytoplasm. The enzyme catalyses cytidine(1402) in 16S rRNA + S-adenosyl-L-methionine = N(4)-methylcytidine(1402) in 16S rRNA + S-adenosyl-L-homocysteine + H(+). In terms of biological role, specifically methylates the N4 position of cytidine in position 1402 (C1402) of 16S rRNA. The chain is Ribosomal RNA small subunit methyltransferase H from Leptothrix cholodnii (strain ATCC 51168 / LMG 8142 / SP-6) (Leptothrix discophora (strain SP-6)).